The primary structure comprises 63 residues: Cecropin-A1 (63 aa).

A signal peptide spans 1–19 (MNFYNIFVFVALILAITIG). Residue Arg-62 is modified to Arginine amide.

The protein belongs to the cecropin family.

It is found in the secreted. Its function is as follows. Cecropins have lytic and antibacterial activity against several Gram-positive and Gram-negative bacteria. The chain is Cecropin-A1 (CecA1) from Drosophila simulans (Fruit fly).